The following is a 282-amino-acid chain: Pantothenate synthetase (282 aa).

30 to 37 contributes to the ATP binding site; the sequence is MGFLHDGH. Residue His-37 is the Proton donor of the active site. Residue Gln-60 participates in (R)-pantoate binding. Gln-60 provides a ligand contact to beta-alanine. 146–149 is an ATP binding site; it reads GQKD. Gln-152 contributes to the (R)-pantoate binding site. ATP-binding positions include Ile-175 and 183 to 186; that span reads KSSR.

This sequence belongs to the pantothenate synthetase family. As to quaternary structure, homodimer.

It is found in the cytoplasm. It catalyses the reaction (R)-pantoate + beta-alanine + ATP = (R)-pantothenate + AMP + diphosphate + H(+). It functions in the pathway cofactor biosynthesis; (R)-pantothenate biosynthesis; (R)-pantothenate from (R)-pantoate and beta-alanine: step 1/1. Its function is as follows. Catalyzes the condensation of pantoate with beta-alanine in an ATP-dependent reaction via a pantoyl-adenylate intermediate. In Campylobacter jejuni (strain RM1221), this protein is Pantothenate synthetase.